The chain runs to 375 residues: Alcohol dehydrogenase 1A (375 aa).

N-acetylserine is present on serine 2. Serine 23 is modified (phosphoserine). Residue cysteine 47 participates in Zn(2+) binding. An NAD(+)-binding site is contributed by 48-52 (GTDDH). Positions 68, 98, 101, 104, 112, and 175 each coordinate Zn(2+). NAD(+)-binding positions include 200 to 205 (GLGGVG), aspartate 224, lysine 229, isoleucine 270, 293 to 295 (VGV), 318 to 320 (AIL), and arginine 370.

Belongs to the zinc-containing alcohol dehydrogenase family. Dimer of identical or heterodimer of closely related subunits alpha, beta, or gamma that are encoded by genes ADH1A, ADH1B, and ADH1C, respectively. It depends on Zn(2+) as a cofactor.

The protein localises to the cytoplasm. It catalyses the reaction a primary alcohol + NAD(+) = an aldehyde + NADH + H(+). The enzyme catalyses a secondary alcohol + NAD(+) = a ketone + NADH + H(+). The catalysed reaction is butan-1-ol + NAD(+) = butanal + NADH + H(+). It carries out the reaction 1-propanol + NAD(+) = propanal + NADH + H(+). Alcohol dehydrogenase. Oxidizes primary as well as secondary alcohols. Ethanol is a very poor substrate. This Homo sapiens (Human) protein is Alcohol dehydrogenase 1A (ADH1A).